The sequence spans 445 residues: Phosphoglucosamine mutase (445 aa).

S101 (phosphoserine intermediate) is an active-site residue. 4 residues coordinate Mg(2+): S101, D240, D242, and D244. S101 carries the post-translational modification Phosphoserine.

This sequence belongs to the phosphohexose mutase family. Requires Mg(2+) as cofactor. Activated by phosphorylation.

The catalysed reaction is alpha-D-glucosamine 1-phosphate = D-glucosamine 6-phosphate. In terms of biological role, catalyzes the conversion of glucosamine-6-phosphate to glucosamine-1-phosphate. In Pseudomonas fluorescens (strain Pf0-1), this protein is Phosphoglucosamine mutase.